The following is a 396-amino-acid chain: MSVGMGIDLEAFRKSQRADGFASILAIGTANPPNVVDQSTYPDYYFRVTNNEDNTDLKDKFKRICERSAIKKRHMYLTEEILKKNPELCAFLEVPSLDTRQAMLAAEVPRLGKEAAEKAIEEWGQPKSRITHLIFCTTTTPDLPGADFEVAKLLGLHPSVKRVGVFQHGCFAGGTVLRLAKDLAENNRGARVLVVCSENTAVTFRGPSETHLDGLVGLALFGDGASALIVGADPIPQVEKPCFEIVWTAQTVVPNSDGAISGKLREVGLTFQLKGAVPDLISTNIEKCLVEAFSQFNISDWNQLFWIAHPGGHAILDQVEASLNLDPTKLRATRHVMSEYGNMSSACVHFILDETRKASRQNGCSTSGGGFQMGVLFGFGPGLTVETVVLKSIPFP.

60–63 (KFKR) contacts substrate. Cysteine 170 is an active-site residue. Residues leucine 273 and 311-313 (GGH) each bind substrate.

Belongs to the thiolase-like superfamily. Chalcone/stilbene synthases family. Homodimer.

The protein resides in the cytoplasm. It carries out the reaction (E)-cinnamoyl-CoA + 3 malonyl-CoA + 3 H(+) = (E)-pinosylvin + 4 CO2 + 4 CoA. The catalysed reaction is 3-phenylpropanoyl-CoA + 3 malonyl-CoA + 3 H(+) = dihydropinosylvin + 4 CO2 + 4 CoA. It functions in the pathway phytoalexin biosynthesis; pinosylvin biosynthesis. Catalyzes the production of pinosylvin from cinnamoyl-CoA and malonyl-CoA, and dihydropinosylvin from dihydrocinnamoyl-CoA. The sequence is that of Pinosylvin synthase 1 from Pinus strobus (Eastern white pine).